The primary structure comprises 85 residues: Dr hemagglutinin AFA-III operon regulatory protein AfaF (85 aa).

This sequence to E.coli PapI and DaaF.

Its function is as follows. May have a possible regulatory function on the expression of the other AFA-III genes. The protein is Dr hemagglutinin AFA-III operon regulatory protein AfaF (afaF) of Escherichia coli.